The primary structure comprises 361 residues: Biotin synthase (361 aa).

Positions 47 to 278 constitute a Radical SAM core domain; the sequence is VHGDEVALCG…AAHIFVMGGR (232 aa). [4Fe-4S] cluster is bound by residues Cys-65, Cys-69, and Cys-72. [2Fe-2S] cluster is bound by residues Ser-110, Cys-143, and Cys-203.

The protein belongs to the radical SAM superfamily. Biotin synthase family. Homodimer. It depends on [4Fe-4S] cluster as a cofactor. [2Fe-2S] cluster serves as cofactor.

It carries out the reaction (4R,5S)-dethiobiotin + (sulfur carrier)-SH + 2 reduced [2Fe-2S]-[ferredoxin] + 2 S-adenosyl-L-methionine = (sulfur carrier)-H + biotin + 2 5'-deoxyadenosine + 2 L-methionine + 2 oxidized [2Fe-2S]-[ferredoxin]. Its pathway is cofactor biosynthesis; biotin biosynthesis; biotin from 7,8-diaminononanoate: step 2/2. In terms of biological role, catalyzes the conversion of dethiobiotin (DTB) to biotin by the insertion of a sulfur atom into dethiobiotin via a radical-based mechanism. The sequence is that of Biotin synthase from Anaeromyxobacter dehalogenans (strain 2CP-C).